The primary structure comprises 116 residues: Ribosome-binding factor A (116 aa).

It belongs to the RbfA family. As to quaternary structure, monomer. Binds 30S ribosomal subunits, but not 50S ribosomal subunits or 70S ribosomes.

It localises to the cytoplasm. In terms of biological role, one of several proteins that assist in the late maturation steps of the functional core of the 30S ribosomal subunit. Associates with free 30S ribosomal subunits (but not with 30S subunits that are part of 70S ribosomes or polysomes). Required for efficient processing of 16S rRNA. May interact with the 5'-terminal helix region of 16S rRNA. The polypeptide is Ribosome-binding factor A (Streptococcus pneumoniae serotype 4 (strain ATCC BAA-334 / TIGR4)).